The chain runs to 258 residues: Thyroxine 5-deiodinase (258 aa).

Residues 1-20 (AACILLFPRFLLTAVMLWLL) traverse the membrane as a helical; Signal-anchor for type II membrane protein segment. Over 21-258 (DFLCIRKKML…QSPGAVVIQV (238 aa)) the chain is Extracellular. Residue selenocysteine 122 is part of the active site. Selenocysteine 122 is a non-standard amino acid (selenocysteine).

The protein belongs to the iodothyronine deiodinase family. Monomer. Homodimer. May undergo minor heretodimerization with DIO1 and DIO2.

It localises to the cell membrane. The protein resides in the endosome membrane. It catalyses the reaction 3,3',5'-triiodo-L-thyronine + iodide + A + H(+) = L-thyroxine + AH2. It carries out the reaction 3,3'-diiodo-L-thyronine + iodide + A + H(+) = 3,3',5-triiodo-L-thyronine + AH2. The enzyme catalyses 3-iodo-L-thyronine + iodide + A + H(+) = 3,5-diiodo-L-thyronine + AH2. The catalysed reaction is L-thyronine + iodide + A + H(+) = 3-iodo-L-thyronine + AH2. It catalyses the reaction 3',5'-diiodo-L-thyronine + iodide + A + H(+) = 3,3',5'-triiodo-L-thyronine + AH2. It carries out the reaction 3'-iodo-L-thyronine + iodide + A + H(+) = 3,3'-diiodo-L-thyronine + AH2. The enzyme catalyses 3,3',5'-triiodothyronamine + iodide + A + H(+) = 3,3',5,5'-tetraiodothyronamine + AH2. The catalysed reaction is 3',5'-diiodothyronamine + iodide + A + H(+) = 3,3',5'-triiodothyronamine + AH2. It catalyses the reaction 3,3'-diiodothyronamine + iodide + A + H(+) = 3,3',5-triiodothyronamine + AH2. It carries out the reaction 3-iodothyronamine + iodide + A + H(+) = 3,5-diiodothyronamine + AH2. The enzyme catalyses 3'-iodothyronamine + iodide + A + H(+) = 3,3'-diiodothyronamine + AH2. The catalysed reaction is thyronamine + iodide + A + H(+) = 3-iodothyronamine + AH2. In terms of biological role, plays a crucial role in the metabolism of thyroid hormones (TH) and has specific roles in TH activation and inactivation by deiodination. Catalyzes the deiodination of L-thyroxine (T4) to 3,3',5'-triiodothyronine (rT3) and 3,5,3'-triiodothyronine (T3) to 3,3'-diiodothyronine (3,3'-T2) via inner-ring deiodination (IRD). Catalyzes the deiodination of rT3 to 3',5'-diiodothyronine (3',5'-T2), 3,3'-T2 to 3'-monoiodothyronine (3'-T1) and 3,5-diiodothyronine (3,5-T2) to 3-monoiodothyronine (3-T1) via IRD. Catalyzes the deiodination of 3-T1 to L-thyronine (T0) via outer-ring deiodination (ORD). Catalyzes the tyrosyl ring deiodinations of 3,3',5,5'-tetraiodothyronamine, 3,3',5'-triiodothyronamine, 3,5,3'-triiodothyronamine, 3,5-diiodothyronamine, 3,3'-diiodothyronamine and 3-iodothyronamine. The chain is Thyroxine 5-deiodinase (DIO3) from Gallus gallus (Chicken).